Here is a 1221-residue protein sequence, read N- to C-terminus: Putative DNA-directed RNA polymerase II subunit RPB2 homolog (1221 aa).

Low complexity-rich tracts occupy residues Met1–Ser54 and Pro692–Ser701. Disordered stretches follow at residues Met1 to Glu63 and Arg673 to Ser701. Asp823 lines the Mg(2+) pocket. Positions 1174, 1177, 1187, and 1190 each coordinate Zn(2+). A C4-type zinc finger spans residues Cys1174 to Cys1190.

It belongs to the RNA polymerase beta chain family.

The catalysed reaction is RNA(n) + a ribonucleoside 5'-triphosphate = RNA(n+1) + diphosphate. Functionally, component of the DNA-dependent RNA polymerase that catalyzes the transcription of DNA into RNA using the four ribonucleoside triphosphates as substrates. Second largest component of RNA polymerase II which synthesizes mRNA precursors and many functional non-coding RNAs. Proposed to contribute to the polymerase catalytic activity and forms the polymerase active center together with the largest subunit. This is Putative DNA-directed RNA polymerase II subunit RPB2 homolog from Dryophytes versicolor (chameleon treefrog).